Consider the following 349-residue polypeptide: GDSL esterase/lipase At1g58525 (349 aa).

The N-terminal stretch at 1-19 (MKLQILLLALVLIAVEANA) is a signal peptide. N-linked (GlcNAc...) asparagine glycosylation occurs at Asn-25. Catalysis depends on Ser-37, which acts as the Nucleophile. Residue Asn-316 is glycosylated (N-linked (GlcNAc...) asparagine). Catalysis depends on residues Asp-324 and His-327.

Belongs to the 'GDSL' lipolytic enzyme family.

Its subcellular location is the secreted. In Arabidopsis thaliana (Mouse-ear cress), this protein is GDSL esterase/lipase At1g58525.